Consider the following 211-residue polypeptide: Mediator of RNA polymerase II transcription subunit 20 (211 aa).

It belongs to the Mediator complex subunit 20 family. Component of the Mediator complex.

Its subcellular location is the nucleus. In terms of biological role, component of the Mediator complex, a coactivator involved in the regulated transcription of nearly all RNA polymerase II-dependent genes. Mediator functions as a bridge to convey information from gene-specific regulatory proteins to the basal RNA polymerase II transcription machinery. Mediator is recruited to promoters by direct interactions with regulatory proteins and serves as a scaffold for the assembly of a functional preinitiation complex with RNA polymerase II and the general transcription factors. The sequence is that of Mediator of RNA polymerase II transcription subunit 20 (SRB2) from Kluyveromyces lactis (strain ATCC 8585 / CBS 2359 / DSM 70799 / NBRC 1267 / NRRL Y-1140 / WM37) (Yeast).